Reading from the N-terminus, the 491-residue chain is UDP-N-acetylmuramate--L-alanine ligase (491 aa).

ATP is bound at residue 126-132 (GTHGKTT).

It belongs to the MurCDEF family.

The protein resides in the cytoplasm. It catalyses the reaction UDP-N-acetyl-alpha-D-muramate + L-alanine + ATP = UDP-N-acetyl-alpha-D-muramoyl-L-alanine + ADP + phosphate + H(+). It functions in the pathway cell wall biogenesis; peptidoglycan biosynthesis. In terms of biological role, cell wall formation. This Enterobacter sp. (strain 638) protein is UDP-N-acetylmuramate--L-alanine ligase.